The sequence spans 223 residues: Thymidylate kinase (223 aa).

7–14 lines the ATP pocket; sequence GIDGAGKS.

Belongs to the thymidylate kinase family.

The catalysed reaction is dTMP + ATP = dTDP + ADP. Functionally, phosphorylation of dTMP to form dTDP in both de novo and salvage pathways of dTTP synthesis. The protein is Thymidylate kinase of Prosthecochloris aestuarii (strain DSM 271 / SK 413).